We begin with the raw amino-acid sequence, 948 residues long: Valine--tRNA ligase (948 aa).

The short motif at 40–50 (PNVTGSLHMGH) is the 'HIGH' region element. Positions 551–555 (KMSKS) match the 'KMSKS' region motif. Residue Lys554 coordinates ATP. Residues 879 to 945 (LIDKGAELAR…GKLAEQHARI (67 aa)) are a coiled coil.

The protein belongs to the class-I aminoacyl-tRNA synthetase family. ValS type 1 subfamily. In terms of assembly, monomer.

The protein resides in the cytoplasm. The catalysed reaction is tRNA(Val) + L-valine + ATP = L-valyl-tRNA(Val) + AMP + diphosphate. Functionally, catalyzes the attachment of valine to tRNA(Val). As ValRS can inadvertently accommodate and process structurally similar amino acids such as threonine, to avoid such errors, it has a 'posttransfer' editing activity that hydrolyzes mischarged Thr-tRNA(Val) in a tRNA-dependent manner. In Pseudomonas savastanoi pv. phaseolicola (strain 1448A / Race 6) (Pseudomonas syringae pv. phaseolicola (strain 1448A / Race 6)), this protein is Valine--tRNA ligase.